The following is a 1037-amino-acid chain: MYLVAGGRGLAGCGHLSVSLLGLLLLLARSGTRALVCLPCDESKCEEPRSCPGSIVQGVCGCCYMCARQRNESCGGAYGLHGACDRGLRCVIRPPLNGDSITEYEVGVCEDEDWDDDQLIGFEPCNENLISGCNIINGKCECGTIRTCNNPFEFPRKDMCLSALKRIEEEKPDCSKARCEVRFSPRCPEDSILIEGYAPPGECCPLPSRCVCDPAGCLRKVCQPGYLNILVSKASGKPGECCDLYECKPVFSVDCSTVECPPVQQAVCPLDSYETQVRLTADGCCTLPARCECLSGLCGFPVCEVGSTPRIVSRGDGTPGKCCDVFECVNETKPACVFNSVEYYDGDMFRMDNCRFCRCQGGVSICFTAQCGELNCERYYVPEGECCPVCEDPIYPLNNPAGCYANGQIRAHGDRWREDDCTFCQCINGEPHCVATACGQSCMHPVKVPGECCPVCEEPTYITIDPPACGELSNCSLKEKDCVYGFKLDHNGCRTCQCKIREELCLGLKRACTLDCPFGFLTDVHNCELCQCRPRPKKCRPTMCDKFCPLGFLKNKHGCDICRCKKCPELPCSKICPLGFQQDSHGCLICKCREVPPSAGPPVLSGTCLSMDGHHHKNEESWHDGCRECYCHNGKEMCALITCPVPACGNPTIRSGQCCPSCTDDFVVQKPELSTPSICHAPGGEYFVEGETWNIDSCTQCTCHSGRVLCETEVCPPLLCQNPSRTQDSCCPQCTDDPPQPSTSHNESVPSYCRNDEGDIFLAAESWKPDACTSCVCVDSAISCYSESCPSVACERPVLRKGQCCPYCLEDTIPKKVVCHFSGKTYADEERWDIDSCTHCYCLQGQTLCSTVSCPPLPCAEPIKVEGSCCPMCPEMYVPEPTNVPIEKKNHRGEIDLEVPMWPTPSENDIIHLPRDMGHLQVDYRDNNRLHPGEDSSLDSIVSVVVPIIICLSIIIAFLLINQKKQWVPLLCWYRTPTKPSSLNNQLVSVDCKKGTRVQVDGPQRMLRIAEPDARFSGFYSMQKQNHLQADNFYQTV.

The signal sequence occupies residues 1-34 (MYLVAGGRGLAGCGHLSVSLLGLLLLLARSGTRA). The IGFBP N-terminal domain maps to 35–112 (LVCLPCDESK…EYEVGVCEDE (78 aa)). The Extracellular segment spans residues 35-940 (LVCLPCDESK…HPGEDSSLDS (906 aa)). Disulfide bonds link Cys37–Cys60, Cys40–Cys62, Cys45–Cys63, Cys51–Cys66, Cys74–Cys90, and Cys84–Cys109. A Cell attachment site motif is present at residues 314–316 (RGD). Asn330 carries an N-linked (GlcNAc...) asparagine glycan. VWFC domains are found at residues 334–391 (PACV…PVCE) and 401–457 (AGCY…PVCE). 4 Antistasin-like domains span residues 469–498 (CGEL…TCQC), 505–532 (CLGL…LCQC), 539–564 (CRPT…ICRC), and 567–592 (CPEL…ICKC). 4 consecutive VWFC domains span residues 606-663 (GTCL…PSCT), 677-735 (SICH…PQCT), 751-809 (SYCR…PYCL), and 817-874 (VVCH…PMCP). The chain crosses the membrane as a helical span at residues 941–961 (IVSVVVPIIICLSIIIAFLLI). Residues 962–1037 (NQKKQWVPLL…LQADNFYQTV (76 aa)) are Cytoplasmic-facing. Thr1036 is modified (phosphothreonine).

As to quaternary structure, interacts with BMP4 and BMP7. Expressed during embryonic development in brain, kidney, spinal cord, testis, lens, vibrissae, pinna, tooth primordia and in specific regions of the CNS. Expressed in adult lens. Displays male-specific expression in the fetal gonads with the strongest expression in the Sertoli cells of developing testis.

The protein localises to the membrane. In terms of biological role, may play a role in CNS development by interacting with growth factors implicated in motor neuron differentiation and survival. May play a role in capillary formation and maintenance during angiogenesis. Modulates BMP activity by affecting its processing and delivery to the cell surface. The protein is Cysteine-rich motor neuron 1 protein (Crim1) of Mus musculus (Mouse).